The primary structure comprises 459 residues: Cobyrinate a,c-diamide synthase (459 aa).

The region spanning 252 to 446 (TLALADDEAF…LHVHFAQRPE (195 aa)) is the GATase cobBQ-type domain. C334 functions as the Nucleophile in the catalytic mechanism.

Belongs to the CobB/CbiA family. In terms of assembly, monomer. The cofactor is Mg(2+).

The enzyme catalyses cob(II)yrinate + 2 L-glutamine + 2 ATP + 2 H2O = cob(II)yrinate a,c diamide + 2 L-glutamate + 2 ADP + 2 phosphate + 2 H(+). It functions in the pathway cofactor biosynthesis; adenosylcobalamin biosynthesis; cob(II)yrinate a,c-diamide from sirohydrochlorin (anaerobic route): step 10/10. Its function is as follows. Catalyzes the ATP-dependent amidation of the two carboxylate groups at positions a and c of cobyrinate, using either L-glutamine or ammonia as the nitrogen source. Is able to use other nucleotide triphosphates as substrate, such as GTP or UTP, although less efficiently than ATP. This Salmonella typhimurium (strain LT2 / SGSC1412 / ATCC 700720) protein is Cobyrinate a,c-diamide synthase.